A 338-amino-acid chain; its full sequence is Lipoate-protein ligase A (338 aa).

The 188-residue stretch at 29–216 (PATQRVLFLW…AFFAHYGERV (188 aa)) folds into the BPL/LPL catalytic domain. ATP is bound by residues Arg-71, 76 to 79 (GAVF), and Lys-134. Lys-134 lines the (R)-lipoate pocket.

It belongs to the LplA family. As to quaternary structure, monomer.

It localises to the cytoplasm. The enzyme catalyses L-lysyl-[lipoyl-carrier protein] + (R)-lipoate + ATP = N(6)-[(R)-lipoyl]-L-lysyl-[lipoyl-carrier protein] + AMP + diphosphate + H(+). The protein operates within protein modification; protein lipoylation via exogenous pathway; protein N(6)-(lipoyl)lysine from lipoate: step 1/2. It participates in protein modification; protein lipoylation via exogenous pathway; protein N(6)-(lipoyl)lysine from lipoate: step 2/2. Functionally, catalyzes both the ATP-dependent activation of exogenously supplied lipoate to lipoyl-AMP and the transfer of the activated lipoyl onto the lipoyl domains of lipoate-dependent enzymes. In Escherichia coli O6:H1 (strain CFT073 / ATCC 700928 / UPEC), this protein is Lipoate-protein ligase A.